The primary structure comprises 153 residues: Superoxide dismutase [Cu-Zn] (153 aa).

Residues histidine 45, histidine 47, and histidine 62 each coordinate Cu cation. An intrachain disulfide couples cysteine 56 to cysteine 145. Positions 62, 70, 79, and 82 each coordinate Zn(2+). Histidine 119 lines the Cu cation pocket.

This sequence belongs to the Cu-Zn superoxide dismutase family. In terms of assembly, homodimer. Requires Cu cation as cofactor. Zn(2+) serves as cofactor.

Its subcellular location is the cytoplasm. The enzyme catalyses 2 superoxide + 2 H(+) = H2O2 + O2. Destroys radicals which are normally produced within the cells and which are toxic to biological systems. The polypeptide is Superoxide dismutase [Cu-Zn] (Drosophila teissieri (Fruit fly)).